Consider the following 1537-residue polypeptide: Dual oxidase (1537 aa).

The tract at residues 1-29 is disordered; the sequence is MSVPSAPHQRAESKNRVPRPGQKNRKLPK. The Extracellular segment spans residues 1 to 626; the sequence is MSVPSAPHQR…EGYDYFSGSE (626 aa). A peroxidase-like; mediates peroxidase activity region spans residues 63–628; sequence MYSQTEKQRY…YDYFSGSELM (566 aa). Asn-133, Asn-233, Asn-577, and Asn-606 each carry an N-linked (GlcNAc...) asparagine glycan. Residues 627–647 traverse the membrane as a helical segment; it reads LMFIYVCVFLGFVPILCAGAG. Topologically, residues 648 to 1029 are cytoplasmic; the sequence is YCVVKLQNSK…ITFLEENRQN (382 aa). Position 826 is a phosphoserine (Ser-826). EF-hand domains lie at 855–890, 891–926, and 936–971; these read PNDM…FSRG, KTDD…LVEI, and QVTE…YKGD. Ca(2+) is bound by residues Asp-868, Asp-870, Asp-872, Arg-874, Glu-879, Asp-904, Asp-906, Asn-908, and Glu-915. A helical transmembrane segment spans residues 1030-1050; that stretch reads IFYLFLFYVVTIVLFVERFIH. At 1051–1065 the chain is on the extracellular side; it reads YSFMAEHTDLRHIMG. Residues 1066-1086 form a helical membrane-spanning segment; sequence VGIAITRGSAASLSFCYSLLL. The 141-residue stretch at 1078 to 1218 folds into the Ferric oxidoreductase domain; that stretch reads LSFCYSLLLL…TLYIGLYLLS (141 aa). Over 1087–1116 the chain is Cytoplasmic; the sequence is LTMSRNLITKLKEFPIQQYIPLDSHIQFHK. Tyr-1105 carries the post-translational modification Phosphotyrosine. The chain crosses the membrane as a helical span at residues 1117-1137; that stretch reads IAACTALFFSVLHTVGHIVNF. The Extracellular portion of the chain corresponds to 1138 to 1171; sequence YHVSTQSHENLRCLTREVHFASDYKPDITFWLFQ. Residues 1172–1192 traverse the membrane as a helical segment; it reads TVTGTTGVMLFIIMCIIFVFA. Over 1193–1202 the chain is Cytoplasmic; sequence HPTIRKKAYN. A helical membrane pass occupies residues 1203–1223; that stretch reads FFWNMHTLYIGLYLLSLIHGL. Over 1224–1230 the chain is Extracellular; the sequence is ARLTGPP. The helical transmembrane segment at 1231–1251 threads the bilayer; sequence RFWMFFLGPGIVYTLDKIVSL. The Cytoplasmic portion of the chain corresponds to 1252–1537; that stretch reads RTKYMALDVI…YFIHHFENFG (286 aa). One can recognise an FAD-binding FR-type domain in the interval 1253 to 1358; sequence TKYMALDVID…EGPFGGGNQD (106 aa).

It in the N-terminal section; belongs to the peroxidase family.

It localises to the membrane. It catalyses the reaction NADH + O2 + H(+) = H2O2 + NAD(+). It carries out the reaction NADPH + O2 + H(+) = H2O2 + NADP(+). Peroxidase activity is inhibited by aminotriazole and azide. Plays a role in innate immunity limiting microbial proliferation in the gut. Acts downstream of a hh-signaling pathway to induce the production of reactive oxygen species (ROS) in response to intestinal bacterial infection. May generate antimicrobial oxidative burst through its peroxidase-like domain. The chain is Dual oxidase (Duox) from Drosophila melanogaster (Fruit fly).